A 1170-amino-acid chain; its full sequence is Disease resistance protein LAZ5 (1170 aa).

A TIR domain is found at 10-172 (ESWQVFINFR…KIIDSIKKVL (163 aa)). Glu84 is a catalytic residue. The segment at 193 to 219 (EAKNVDTFSPNSSDFPSTSIDDDLSIN) is disordered. Over residues 198–219 (DTFSPNSSDFPSTSIDDDLSIN) the composition is skewed to polar residues. Residues 261-513 (RLKEMEEKLD…DVACFFKSEN (253 aa)) enclose the NB-ARC domain. LRR repeat units lie at residues 595–616 (MENVRGIFLDMSKVPEEMTFDG), 622–645 (MCNLRYLKIYSSVCHKEGEGIFKF), 646–670 (DTVREIQLPLDKVRYLHWMKYPWEK), 677–700 (PENLVDLELPYSSIKKVWEGVKDT), 723–747 (AKNLERLNLEGCTSLLKLPQEMENM), 761–785 (LTCLQSIKVSSLKILILSDCSKLEE), 790–813 (SENLEELYLDGTAIKGLPPAAGDL), 815–837 (RLVVLNMEGCTELESLPKRLGKQ), 838–861 (KALQELVLSGCSKLESVPTDVKDM), 862–885 (KHLRLLLLDGTRIRKIPKIKSLKC), 888–904 (LSRNIAMVNLQDNLKDF), and 905–930 (SNLKCLVMKNCENLRYLPSLPKCLEY).

It catalyses the reaction NAD(+) + H2O = ADP-D-ribose + nicotinamide + H(+). In terms of biological role, TIR-NB-LRR receptor-like protein that may play a role in plant innate immunity. May trigger hypersensitive programmed cell death in response to pathogen attack. Involved in tolerance to tobacco ringspot virus (TRSV). The polypeptide is Disease resistance protein LAZ5 (Arabidopsis thaliana (Mouse-ear cress)).